Consider the following 131-residue polypeptide: D-ribose pyranase (131 aa).

Catalysis depends on histidine 20, which acts as the Proton donor. Residues aspartate 28, histidine 98, and 120 to 122 (YAN) contribute to the substrate site.

This sequence belongs to the RbsD / FucU family. RbsD subfamily. In terms of assembly, homodecamer.

It is found in the cytoplasm. It catalyses the reaction beta-D-ribopyranose = beta-D-ribofuranose. It participates in carbohydrate metabolism; D-ribose degradation; D-ribose 5-phosphate from beta-D-ribopyranose: step 1/2. Catalyzes the interconversion of beta-pyran and beta-furan forms of D-ribose. The protein is D-ribose pyranase of Laribacter hongkongensis (strain HLHK9).